The following is a 228-amino-acid chain: ATP-dependent dethiobiotin synthetase BioD 1 (228 aa).

Glu-13–Val-18 contacts ATP. Thr-17 is a Mg(2+) binding site. Lys-38 is a catalytic residue. A substrate-binding site is contributed by Ser-42. ATP contacts are provided by residues Asp-55, Glu-116–Gly-119, Asn-176–Asp-177, and Pro-205–Leu-207. Mg(2+) contacts are provided by Asp-55 and Glu-116.

The protein belongs to the dethiobiotin synthetase family. Homodimer. It depends on Mg(2+) as a cofactor.

The protein localises to the cytoplasm. It catalyses the reaction (7R,8S)-7,8-diammoniononanoate + CO2 + ATP = (4R,5S)-dethiobiotin + ADP + phosphate + 3 H(+). Its pathway is cofactor biosynthesis; biotin biosynthesis; biotin from 7,8-diaminononanoate: step 1/2. Its function is as follows. Catalyzes a mechanistically unusual reaction, the ATP-dependent insertion of CO2 between the N7 and N8 nitrogen atoms of 7,8-diaminopelargonic acid (DAPA, also called 7,8-diammoniononanoate) to form a ureido ring. The sequence is that of ATP-dependent dethiobiotin synthetase BioD 1 from Salmonella typhimurium (strain LT2 / SGSC1412 / ATCC 700720).